A 382-amino-acid chain; its full sequence is Myb-like transcription factor (382 aa).

Myb-like domains follow at residues 1–57 (MPRS…RWSK), 58–108 (ITGA…QHCL), and 109–160 (DPSL…ITLF). The span at 194–210 (MSMDASEDGDDAEDDQT) shows a compositional bias: acidic residues. Positions 194–240 (MSMDASEDGDDAEDDQTPDSYTSISTSSFDDILGGSSSSPSAADTMT) are disordered. Residues 211-240 (PDSYTSISTSSFDDILGGSSSSPSAADTMT) are compositionally biased toward polar residues.

The protein resides in the nucleus. Functionally, transcription factor; part of the gene cluster that mediates the biosynthesis of 1233A, a natural compound known as an inhibitor of HMG-CoA synthase in the mevalonate pathway and with antibacterial and antifungal activities. Involved in hygromycin B-induced transcriptional control of the cluster. The chain is Myb-like transcription factor from Fusarium sp.